The following is a 230-amino-acid chain: 3-beta-hydroxysteroid-Delta(8),Delta(7)-isomerase (230 aa).

Threonine 2 carries the post-translational modification N-acetylthreonine. Transmembrane regions (helical) follow at residues 29–49 (WHIL…TWLL), 66–86 (LCWF…FSFY), 121–141 (MESV…IAFL), and 185–205 (FWFY…ILVF). One can recognise an EXPERA domain in the interval 61 to 204 (GRRLALCWFA…IWLVIPGILV (144 aa)).

Belongs to the EBP family. In terms of tissue distribution, expressed in liver.

Its subcellular location is the endoplasmic reticulum membrane. The protein resides in the nucleus envelope. The protein localises to the cytoplasmic vesicle. It catalyses the reaction lathosterol = 5alpha-cholest-8-en-3beta-ol. It carries out the reaction zymosterol = 5alpha-cholesta-7,24-dien-3beta-ol. The enzyme catalyses 5,6alpha-epoxy-5alpha-cholestan-3beta-ol + H2O = 5alpha-cholestane-3beta,5,6beta-triol. The catalysed reaction is 5,6beta-epoxy-5beta-cholestan-3beta-ol + H2O = 5alpha-cholestane-3beta,5,6beta-triol. Its pathway is steroid biosynthesis; cholesterol biosynthesis. Its activity is regulated as follows. Enzymatic activity is induced by 25-hydroxycholesterol, cholestyramine and lovastatin. Its function is as follows. Isomerase that catalyzes the conversion of Delta(8)-sterols to their corresponding Delta(7)-isomers. In terms of biological role, component of the microsomal antiestrogen binding site (AEBS), a multiproteic complex at the ER membrane that consists of an association between EBP and 7-dehydrocholesterol reductase/DHCR7. This complex is responsible for cholesterol-5,6-epoxide hydrolase (ChEH) activity, which consists in the hydration of cholesterol-5,6-epoxides (5,6-EC) into cholestane-3beta,5alpha,6beta-triol (CT). The precise role of each component of this complex has not been described yet. The polypeptide is 3-beta-hydroxysteroid-Delta(8),Delta(7)-isomerase (Rattus norvegicus (Rat)).